We begin with the raw amino-acid sequence, 418 residues long: MYSSDAPINWKRNLTITWIGCFLTGAAFSLVMPFLPLYVESLGVTGHSALNMWSGLVFSITFLFSAIASPFWGGLADRKGRKIMLLRSALGMAIVMLLMGLAQNIWQFLILRALLGLLGGFIPNANALIATQIPRHKSGWALGTLSTGGVSGALLGPLVGGVLADSYGLRPVFFMTASVLFLCFLLTLLFIREQFQPVAKKEMLHAREVIASLKSPKLVLSLFVTTLIIQVATGSIAPILTLYVRDLAGNVANIAFISGMIASVPGVAALISAPRLGKLGDRIGPEKILIAALVISVLLLIPMSFVQTPWQLGLLRFLLGAADGALLPAVQTLLVYNATNQIAGRVFSYNQSFRDIGNVTGPLIGASVSANYGFRAVFLVTAMVVLFNAVYTGLSLRRTGATALPAQDVEKDDTSLVR.

Helical transmembrane passes span 19–39, 56–76, 90–110, 113–133, 144–164, 171–191, 222–242, 251–271, 288–308, 317–337, and 376–396; these read IGCF…PLYV, LVFS…GGLA, LGMA…QFLI, ALLG…ATQI, TLST…GVLA, PVFF…LLFI, LFVT…ILTL, VANI…AALI, ILIA…FVQT, FLLG…LVYN, and AVFL…GLSL.

This sequence belongs to the major facilitator superfamily. DHA1 family. MdtG (TC 2.A.1.2.20) subfamily.

The protein localises to the cell inner membrane. The protein is Multidrug resistance protein MdtG of Enterobacter lignolyticus (strain SCF1).